A 126-amino-acid chain; its full sequence is Protein C10 (126 aa).

Ala-2 carries the post-translational modification N-acetylalanine.

This sequence belongs to the UPF0456 family. As to expression, ubiquitously expressed, with higher expression in lung and fetal brain.

It is found in the cytoplasm. In brain, may be required for corpus callosum development. This chain is Protein C10 (C12orf57), found in Homo sapiens (Human).